We begin with the raw amino-acid sequence, 531 residues long: Apolipoprotein N-acyltransferase (531 aa).

A run of 7 helical transmembrane segments spans residues 8-28, 34-54, 69-89, 105-125, 136-156, 178-198, and 207-227; these read IILL…LLAV, FGIF…IDGV, PAAI…WWLG, LAVV…VVIA, IAAL…VFTG, VVNL…PALI, and GLAI…YRLA. In terms of domain architecture, CN hydrolase spans 243–493; it reads VQPVIDQAKK…RGVLDTILPG (251 aa). The active-site Proton acceptor is the Glu287. The active site involves Lys351. Cys405 functions as the Nucleophile in the catalytic mechanism. The helical transmembrane segment at 507–527 threads the bilayer; sequence IFWLSMAILSIVASFSRFGFN.

It belongs to the CN hydrolase family. Apolipoprotein N-acyltransferase subfamily.

The protein resides in the cell inner membrane. The enzyme catalyses N-terminal S-1,2-diacyl-sn-glyceryl-L-cysteinyl-[lipoprotein] + a glycerophospholipid = N-acyl-S-1,2-diacyl-sn-glyceryl-L-cysteinyl-[lipoprotein] + a 2-acyl-sn-glycero-3-phospholipid + H(+). It functions in the pathway protein modification; lipoprotein biosynthesis (N-acyl transfer). In terms of biological role, catalyzes the phospholipid dependent N-acylation of the N-terminal cysteine of apolipoprotein, the last step in lipoprotein maturation. In Sinorhizobium medicae (strain WSM419) (Ensifer medicae), this protein is Apolipoprotein N-acyltransferase.